Here is a 315-residue protein sequence, read N- to C-terminus: MAATAVGNDVIDRDLPTAVRLLNSLTEQIVSVTSHVRELIKKVREKAYQTSKGLSFLDLRYHLLLFYLQDITHLISLKTEGESLKDNSAIHRLVTIRTVLEKMRPLDQKLKYQIDKLVRTAVTGSLSENDPLHFRPNPQSLVSKLSESEDSDDDGVGGKTKEQKEPSGGRRYVPPRIAPMHYDGDLTEADRQKERVEKQKRAALRSSVIQELRQQYSDAPEEIRDRRDFQTDRQGREELNRKNYEESMMVRLSTTRDQKLRKRGMMGMTSQLSNITRFSDITALTGGEVQDIGNPKPKKKKIIKKGKKKVFRKRK.

Disordered regions lie at residues 127–201 (SEND…KQKR) and 289–315 (VQDI…RKRK). Basic and acidic residues-rich tracts occupy residues 159-168 (KTKEQKEPSG) and 182-200 (YDGD…EKQK). A coiled-coil region spans residues 181-206 (HYDGDLTEADRQKERVEKQKRAALRS). Over residues 296–315 (KPKKKKIIKKGKKKVFRKRK) the composition is skewed to basic residues.

This sequence belongs to the SAS10 family. As to quaternary structure, part of the small subunit (SSU) processome, composed of more than 70 proteins and the RNA chaperone small nucleolar RNA (snoRNA) U3.

It localises to the nucleus. The protein resides in the nucleolus. The protein localises to the chromosome. Its subcellular location is the centromere. It is found in the cytoplasm. It localises to the cell projection. The protein resides in the axon. The protein localises to the dendrite. Its subcellular location is the filopodium. In terms of biological role, part of the small subunit (SSU) processome, first precursor of the small eukaryotic ribosomal subunit. During the assembly of the SSU processome in the nucleolus, many ribosome biogenesis factors, an RNA chaperone and ribosomal proteins associate with the nascent pre-rRNA and work in concert to generate RNA folding, modifications, rearrangements and cleavage as well as targeted degradation of pre-ribosomal RNA by the RNA exosome. Its dissociation from the complex determines the transition from state pre-A1 to state pre-A1*. May inhibit mRNA translation. The polypeptide is Neuroguidin (ngdn) (Danio rerio (Zebrafish)).